A 99-amino-acid chain; its full sequence is Small ribosomal subunit protein bS6c (99 aa).

This sequence belongs to the bacterial ribosomal protein bS6 family.

It is found in the plastid. It localises to the chloroplast. Its function is as follows. Binds together with bS18 to 16S ribosomal RNA. The chain is Small ribosomal subunit protein bS6c from Cyanidioschyzon merolae (strain NIES-3377 / 10D) (Unicellular red alga).